The following is a 350-amino-acid chain: Dihydroorotase (350 aa).

Positions 17 and 19 each coordinate Zn(2+). Substrate contacts are provided by residues 19-21 and Asn-45; that span reads HLR. Zn(2+) contacts are provided by Lys-103, His-140, and His-178. Lys-103 is subject to N6-carboxylysine. His-140 contributes to the substrate binding site. Position 224 (Leu-224) interacts with substrate. Asp-252 is a Zn(2+) binding site. Asp-252 is an active-site residue. The substrate site is built by His-256 and Ala-268.

Belongs to the metallo-dependent hydrolases superfamily. DHOase family. Class II DHOase subfamily. Homodimer. Zn(2+) serves as cofactor.

It carries out the reaction (S)-dihydroorotate + H2O = N-carbamoyl-L-aspartate + H(+). Its pathway is pyrimidine metabolism; UMP biosynthesis via de novo pathway; (S)-dihydroorotate from bicarbonate: step 3/3. Functionally, catalyzes the reversible cyclization of carbamoyl aspartate to dihydroorotate. The sequence is that of Dihydroorotase from Buchnera aphidicola subsp. Acyrthosiphon pisum (strain 5A).